A 274-amino-acid polypeptide reads, in one-letter code: Putative hydro-lyase Veis_4744 (274 aa).

Belongs to the D-glutamate cyclase family.

The polypeptide is Putative hydro-lyase Veis_4744 (Verminephrobacter eiseniae (strain EF01-2)).